We begin with the raw amino-acid sequence, 374 residues long: Large ribosomal subunit protein bL27m (374 aa).

The N-terminal 41 residues, 1 to 41 (MLRLSGVKSAVRARAAAGAAFSVSLSGPQAVSLLALPLVRH), are a transit peptide targeting the mitochondrion.

This sequence belongs to the bacterial ribosomal protein bL27 family.

The protein resides in the mitochondrion. Its function is as follows. Component of the large subunit of mitochondrial ribosome. This chain is Large ribosomal subunit protein bL27m (MRPL2), found in Yarrowia lipolytica (strain CLIB 122 / E 150) (Yeast).